A 268-amino-acid chain; its full sequence is MVSLTTCCLKNIVNQHAHVENTVLLYHLGLRWNCKTLYQCTQCNGVNYTNSHSDQCKNKDLFLMKVIVKKNLAVARTLLSWGASPEYARLFCRNTEEEQALNVQQVADVSSSKILERLTMSYKENDEQLLITFYLLNLSTNFSTNLREQVRFNIVSYIICDLAIHQTFKIFYAKNYSLSTLYCIFLAIYYKRYTALRKMVKIYPGLKPFAYLTGFMFDDERVMETYNSTDDEISECKNRIIAIKGCYGNFHCRSDIDHMYAFSQNNFW.

Residues Met1 to Asn175 are Cytoplasmic-facing. The helical transmembrane segment at Tyr176–Tyr193 threads the bilayer. The Extracellular portion of the chain corresponds to Thr194–Trp268.

Belongs to the asfivirus MGF 300 family.

It is found in the host membrane. Plays a role in virus cell tropism, and may be required for efficient virus replication in macrophages. This chain is Protein MGF 300-1L, found in African swine fever virus (isolate Tick/South Africa/Pretoriuskop Pr4/1996) (ASFV).